The primary structure comprises 429 residues: Glucose-6-phosphate exchanger SLC37A4 (429 aa).

10 helical membrane passes run 84–104, 105–125, 139–159, 167–187, 219–239, 260–280, 302–322, 329–349, 368–388, and 394–414; these read LLLV…PVFA, ALWF…GKVL, AILS…ATIL, STLA…LLLI, ELLL…VFGV, LVGS…SIAA, GLLL…RVTV, LWIL…IALF, IVGL…STIA, and STAF…FFLL.

The protein belongs to the major facilitator superfamily. Organophosphate:Pi antiporter (OPA) (TC 2.A.1.4) family. As to expression, mostly expressed in liver and kidney.

The protein resides in the endoplasmic reticulum membrane. It carries out the reaction D-glucose 6-phosphate(in) + phosphate(out) = D-glucose 6-phosphate(out) + phosphate(in). Its activity is regulated as follows. Inhibited by vanadate and chlorogenic acid. Inorganic phosphate and glucose-6-phosphate antiporter of the endoplasmic reticulum. Transports cytoplasmic glucose-6-phosphate into the lumen of the endoplasmic reticulum and translocates inorganic phosphate into the opposite direction. Forms with glucose-6-phosphatase the complex responsible for glucose production through glycogenolysis and gluconeogenesis. Hence, it plays a central role in homeostatic regulation of blood glucose levels. The sequence is that of Glucose-6-phosphate exchanger SLC37A4 from Homo sapiens (Human).